The primary structure comprises 315 residues: Glucokinase-like protein CC_3167 (315 aa).

Belongs to the bacterial glucokinase family.

In Caulobacter vibrioides (strain ATCC 19089 / CIP 103742 / CB 15) (Caulobacter crescentus), this protein is Glucokinase-like protein CC_3167.